We begin with the raw amino-acid sequence, 274 residues long: Centromere protein K (274 aa).

The disordered stretch occupies residues 1–21; the sequence is MSGYQHELPPNISKTSPAPEE. A coiled-coil region spans residues 96 to 159; sequence KEELEKIAQE…NQLTAFSEKR (64 aa).

This sequence belongs to the CENP-K/MCM22 family.

Its subcellular location is the nucleus. The protein resides in the chromosome. It localises to the centromere. The protein localises to the kinetochore. Probable component of a centromeric complex involved in assembly of kinetochore proteins, mitotic progression and chromosome segregation. The protein is Centromere protein K (cenpk) of Xenopus laevis (African clawed frog).